A 609-amino-acid polypeptide reads, in one-letter code: MSDVFNANQFLKTVTSSPGVYRMYDAKAVVIYVGKAKDLKKRLSSYFRKNLTNVKTQALVSHIANIDVTVTHSETDALILENDYIKQYMPKYNVLLRDDKSYPYILLSNHKHPRLAYHRGPKRDKGLYFGPYPNGGAVRESLHLLQKIFPIRQCDDLYYKSRSRPCLQYQIGRCSAPCVGKVSLEDYQEQVRLATLFLKGKDHQVMSVLVGKMEQAASDMRYEQAALYRDQITALRRVSEQQEVSNASGDMDVIGAYYASGVACFHLLFIREGKIFGSRSYYPKVPVNTEVSEVLRSFMLQFYLNSDSQRLTPKEILISEPFEEQDELAKAIQAAQNKKVEIKTQVRGERASFLRLALTNATNAVNTRLSHKNTIEQRFLLLEEAIESTNKIQRMECFDISHTMGESTVASCVVFNREGPSKADYRRYNITGITPGDDYAAMKQAITRRFDKISSSGKIPDILFIDGGIGQLRIAQKVVDEKFVALDNAPTLIGVAKGEGRKPGLETLIYGENEESFTLPADSGALHLIQHIRDESHRFAITGHRNKRQKTRNTSTLESIAGVGPKRRKALLQYLGGLQEVKGASVSELVKVPGISLEMAQTIHDALRG.

The region spanning 16–94 (SSPGVYRMYD…IKQYMPKYNV (79 aa)) is the GIY-YIG domain. Positions 203-238 (HQVMSVLVGKMEQAASDMRYEQAALYRDQITALRRV) constitute a UVR domain.

Belongs to the UvrC family. Interacts with UvrB in an incision complex.

Its subcellular location is the cytoplasm. Functionally, the UvrABC repair system catalyzes the recognition and processing of DNA lesions. UvrC both incises the 5' and 3' sides of the lesion. The N-terminal half is responsible for the 3' incision and the C-terminal half is responsible for the 5' incision. The polypeptide is UvrABC system protein C (Shewanella halifaxensis (strain HAW-EB4)).